The chain runs to 434 residues: ATP-dependent protease ATPase subunit HslU (434 aa).

ATP-binding positions include isoleucine 18, 60–65, aspartate 247, glutamate 312, and arginine 384; that span reads GVGKTE.

Belongs to the ClpX chaperone family. HslU subfamily. A double ring-shaped homohexamer of HslV is capped on each side by a ring-shaped HslU homohexamer. The assembly of the HslU/HslV complex is dependent on binding of ATP.

It localises to the cytoplasm. Functionally, ATPase subunit of a proteasome-like degradation complex; this subunit has chaperone activity. The binding of ATP and its subsequent hydrolysis by HslU are essential for unfolding of protein substrates subsequently hydrolyzed by HslV. HslU recognizes the N-terminal part of its protein substrates and unfolds these before they are guided to HslV for hydrolysis. In Brucella melitensis biotype 1 (strain ATCC 23456 / CCUG 17765 / NCTC 10094 / 16M), this protein is ATP-dependent protease ATPase subunit HslU.